Reading from the N-terminus, the 352-residue chain is uncharacterized protein (352 aa).

This is an uncharacterized protein from Thermoproteus tenax (TTV1).